The sequence spans 161 residues: Crossover junction endodeoxyribonuclease RuvC (161 aa).

Active-site residues include aspartate 9, glutamate 69, and histidine 144. Aspartate 9, glutamate 69, and histidine 144 together coordinate Mg(2+).

Belongs to the RuvC family. In terms of assembly, homodimer which binds Holliday junction (HJ) DNA. The HJ becomes 2-fold symmetrical on binding to RuvC with unstacked arms; it has a different conformation from HJ DNA in complex with RuvA. In the full resolvosome a probable DNA-RuvA(4)-RuvB(12)-RuvC(2) complex forms which resolves the HJ. Mg(2+) is required as a cofactor.

It localises to the cytoplasm. The catalysed reaction is Endonucleolytic cleavage at a junction such as a reciprocal single-stranded crossover between two homologous DNA duplexes (Holliday junction).. Functionally, the RuvA-RuvB-RuvC complex processes Holliday junction (HJ) DNA during genetic recombination and DNA repair. Endonuclease that resolves HJ intermediates. Cleaves cruciform DNA by making single-stranded nicks across the HJ at symmetrical positions within the homologous arms, yielding a 5'-phosphate and a 3'-hydroxyl group; requires a central core of homology in the junction. The consensus cleavage sequence is 5'-(A/T)TT(C/G)-3'. Cleavage occurs on the 3'-side of the TT dinucleotide at the point of strand exchange. HJ branch migration catalyzed by RuvA-RuvB allows RuvC to scan DNA until it finds its consensus sequence, where it cleaves and resolves the cruciform DNA. This Borrelia turicatae (strain 91E135) protein is Crossover junction endodeoxyribonuclease RuvC.